The primary structure comprises 83 residues: U3-theraphotoxin-Cg1a (83 aa).

Residues 1–23 form the signal peptide; that stretch reads MRTFTLIAILTCAVLVIFHAAAA. The propeptide occupies 24-44; sequence EELEAQDVIETEALATLDEER. Disulfide bonds link Cys48/Cys61, Cys52/Cys75, and Cys69/Cys80.

This sequence belongs to the neurotoxin 12 (Hwtx-2) family. 03 (juruin) subfamily. In terms of processing, contains 3 disulfide bonds. Two different connectivities are observed in similar proteins (C1-C3, C2-C5, C4-C6 or C1-C4, C2-C5, C3-C6). Expressed by the venom gland.

The protein localises to the secreted. In terms of biological role, probable ion channel inhibitor. This Chilobrachys guangxiensis (Chinese earth tiger tarantula) protein is U3-theraphotoxin-Cg1a.